The chain runs to 101 residues: Integration host factor subunit beta (101 aa).

The protein belongs to the bacterial histone-like protein family. Heterodimer of an alpha and a beta chain.

Functionally, this protein is one of the two subunits of integration host factor, a specific DNA-binding protein that functions in genetic recombination as well as in transcriptional and translational control. This is Integration host factor subunit beta from Nitrobacter hamburgensis (strain DSM 10229 / NCIMB 13809 / X14).